The sequence spans 218 residues: Peptide methionine sulfoxide reductase MsrA (218 aa).

Cysteine 57 is a catalytic residue.

The protein belongs to the MsrA Met sulfoxide reductase family.

It carries out the reaction L-methionyl-[protein] + [thioredoxin]-disulfide + H2O = L-methionyl-(S)-S-oxide-[protein] + [thioredoxin]-dithiol. The enzyme catalyses [thioredoxin]-disulfide + L-methionine + H2O = L-methionine (S)-S-oxide + [thioredoxin]-dithiol. Its function is as follows. Has an important function as a repair enzyme for proteins that have been inactivated by oxidation. Catalyzes the reversible oxidation-reduction of methionine sulfoxide in proteins to methionine. In Brucella anthropi (Ochrobactrum anthropi), this protein is Peptide methionine sulfoxide reductase MsrA.